A 125-amino-acid polypeptide reads, in one-letter code: Large ribosomal subunit protein bL12 (125 aa).

It belongs to the bacterial ribosomal protein bL12 family. Homodimer. Part of the ribosomal stalk of the 50S ribosomal subunit. Forms a multimeric L10(L12)X complex, where L10 forms an elongated spine to which 2 to 4 L12 dimers bind in a sequential fashion. Binds GTP-bound translation factors.

Forms part of the ribosomal stalk which helps the ribosome interact with GTP-bound translation factors. Is thus essential for accurate translation. This Helicobacter pylori (strain ATCC 700392 / 26695) (Campylobacter pylori) protein is Large ribosomal subunit protein bL12.